The chain runs to 1511 residues: Pleiotropic ABC efflux transporter of multiple drugs (1511 aa).

The span at 1–14 (MPEAKLNNNVNDVT) shows a compositional bias: polar residues. A disordered region spans residues 1 to 32 (MPEAKLNNNVNDVTSYSSASSSTENAADLHNY). The Cytoplasmic segment spans residues 1–517 (MPEAKLNNNV…LLIRNMWRLR (517 aa)). A Phosphoserine modification is found at serine 22. Threonine 49 and threonine 51 each carry phosphothreonine. The tract at residues 52-71 (AQSMQNSTQSAPNKSDAQSI) is disordered. A phosphoserine mark is found at serine 54, serine 58, and serine 61. Positions 161 to 410 (LRKFQRSKET…FEDMGYVCPS (250 aa)) constitute an ABC transporter 1 domain. Residues 518-542 (NNIGFTLFMILGNCSMALILGSMFF) form a helical membrane-spanning segment. Residues 543 to 558 (KIMKKGDTSTFYFRGS) lie on the Extracellular side of the membrane. The helical transmembrane segment at 559-579 (AMFFAILFNAFSSLLEIFSLY) threads the bilayer. At 580-611 (EARPITEKHRTYSLYHPSADAFASVLSEIPSK) the chain is on the cytoplasmic side. A helical transmembrane segment spans residues 612-628 (LIIAVCFNIIFYFLVDF). At 629-631 (RRN) the chain is on the extracellular side. A helical transmembrane segment spans residues 632–650 (GGVFFFYLLINIVAVFSMS). Topologically, residues 651-665 (HLFRCVGSLTKTLSE) are cytoplasmic. A helical membrane pass occupies residues 666–685 (AMVPASMLLLALSMYTGFAI). Over 686–774 (PKKKILRWSK…QYYHKDKWRG (89 aa)) the chain is Extracellular. The N-linked (GlcNAc...) asparagine glycan is linked to asparagine 734. A helical membrane pass occupies residues 775 to 793 (FGIGMAYVVFFFFVYLFLC). Residues 794-1237 (EYNEGAKQKG…GTSLQGLQNQ (444 aa)) are Cytoplasmic-facing. Residues 824–858 (EKNANDPENVGERSDLSSDRKMLQESSEEESDTYG) form a disordered region. Lysine 825 participates in a covalent cross-link: Glycyl lysine isopeptide (Lys-Gly) (interchain with G-Cter in ubiquitin). Positions 833 to 846 (VGERSDLSSDRKML) are enriched in basic and acidic residues. Residues serine 837, serine 840, serine 841, serine 849, serine 850, and serine 854 each carry the phosphoserine modification. Residues 869 to 1112 (FHWRNLCYEV…MIDYFESHGA (244 aa)) enclose the ABC transporter 2 domain. 905–912 (GASGAGKT) lines the ATP pocket. A helical transmembrane segment spans residues 1238–1260 (MLAVFMFTVIFNPILQQYLPSFV). Topologically, residues 1261–1291 (QQRDLYEARERPSRTFSWISFIFAQIFVEVP) are extracellular. Residues 1292 to 1313 (WNILAGTIAYFIYYYPIGFYSN) traverse the membrane as a helical segment. Residues 1314–1324 (ASAAGQLHERG) are Cytoplasmic-facing. A helical transmembrane segment spans residues 1325–1349 (ALFWLFSCAFYVYVGSMGLLVISFN). The Extracellular portion of the chain corresponds to 1350–1354 (QVAES). The helical transmembrane segment at 1355-1379 (AANLASLLFTMSLSFCGVMTTPSAM) threads the bilayer. Residues 1380-1388 (PRFWIFMYR) are Cytoplasmic-facing. A helical membrane pass occupies residues 1389–1407 (VSPLTYFIQALLAVGVANV). Over 1408–1476 (DVKCADYELL…VNSFYSERWR (69 aa)) the chain is Extracellular. The N-linked (GlcNAc...) asparagine glycan is linked to asparagine 1447. The chain crosses the membrane as a helical span at residues 1477 to 1499 (NYGIFICYIAFNYIAGVFFYWLA). Residues 1500–1511 (RVPKKNGKLSKK) are Cytoplasmic-facing.

Belongs to the ABC transporter superfamily. ABCG family. PDR (TC 3.A.1.205) subfamily. Post-translationally, ubiquitinylation mediates endocytosis and vacuolar degradation. Phosphorylation by casein kinase I stabilizes the protein half-life.

It is found in the cell membrane. With respect to regulation, FK506, isonitrile, enniatin, RU49953, kitasatospora E420, staurosporine CGP42700, prenyl-flavonoids, D-octapeptides were found to be inhibitors in vivo. Vanadate and oligomycin were found to be inhibitors in vitro. Its function is as follows. Active efflux of weakly charged organic compounds of 90 cubic Angstroms to 300 cubic Angstroms surface volume. Confers resistance to numerous chemicals including cycloheximide, sulfomethuron methyl, steroids, antiseptics, antibiotics, anticancer, herbicides, mycotoxins, insecticides, ionophores, alkaloids, flavonoids, phenothiazines, organotin compounds, carbazoles, lysosomotropic aminoesters, detergents, rhodamines and other fluorophores, azoles and other antifungals. Exhibits nucleoside triphosphatase activity. This is Pleiotropic ABC efflux transporter of multiple drugs (PDR5) from Saccharomyces cerevisiae (strain ATCC 204508 / S288c) (Baker's yeast).